We begin with the raw amino-acid sequence, 298 residues long: Putative glycylpeptide N-tetradecanoyltransferase (298 aa).

The protein belongs to the NMT family.

The catalysed reaction is N-terminal glycyl-[protein] + tetradecanoyl-CoA = N-tetradecanoylglycyl-[protein] + CoA + H(+). Adds a myristoyl group to the N-terminal glycine residue of certain proteins. The protein is Putative glycylpeptide N-tetradecanoyltransferase of Melanoplus sanguinipes (Migratory grasshopper).